The chain runs to 322 residues: RING finger protein 113B (322 aa).

A disordered region spans residues 24-92 (KPGRKGAAGL…EEAAPESLDV (69 aa)). The span at 46–60 (SSSSGDEGDTVAQPP) shows a compositional bias: low complexity. The C3H1-type zinc finger occupies 190-218 (DYQPDICKDYKETGFCGFGDSCKFLHDRS). The RING-type zinc finger occupies 256–294 (CFICRQAFQNPVVTKCRHYFCESCALEHFRATPRCYICD).

The sequence is that of RING finger protein 113B (RNF113B) from Homo sapiens (Human).